A 237-amino-acid chain; its full sequence is MAKDTTGRMRVTVKSGGRMKLSSKLWLERQLNDPYVAQAKRDGYRSRAAYKLTEIDDKFRLLKSGMAVVDLGAAPGGWSQVAAKKVGAADGRGKVVAIDLLEMGEVPGVTFAQLDFLDPSAPERLREMLGGGADIVMSDMAANTTGHRKTDQLRIVGLVETAAMFASEVLKPGGTFLAKVFQSGADASLMTELKRDYASVKHVKPAASRKDSSERYLLATGFRGGAARDAEAAAEAE.

5 residues coordinate S-adenosyl-L-methionine: Gly-76, Trp-78, Asp-99, Asp-115, and Asp-139. The active-site Proton acceptor is Lys-179.

Belongs to the class I-like SAM-binding methyltransferase superfamily. RNA methyltransferase RlmE family.

It is found in the cytoplasm. It catalyses the reaction uridine(2552) in 23S rRNA + S-adenosyl-L-methionine = 2'-O-methyluridine(2552) in 23S rRNA + S-adenosyl-L-homocysteine + H(+). Functionally, specifically methylates the uridine in position 2552 of 23S rRNA at the 2'-O position of the ribose in the fully assembled 50S ribosomal subunit. The chain is Ribosomal RNA large subunit methyltransferase E from Rhodopseudomonas palustris (strain TIE-1).